A 284-amino-acid polypeptide reads, in one-letter code: SF-assemblin (284 aa).

Residues 1-30 (PTPSPEARVASRPFLDSPLPGSPRSGSPTG) are disordered. Residues 1–38 (PTPSPEARVASRPFLDSPLPGSPRSGSPTGYITATKAI) are nonhelical region. The span at 17–30 (SPLPGSPRSGSPTG) shows a compositional bias: low complexity. The rod stretch occupies residues 39 to 284 (SAGKLEHVAE…QDGLRIVNNS (246 aa)). Coiled coils occupy residues 56–102 (EIEL…QIQV) and 239–268 (LDEINNLKSAVQMEREERISEDDEIVQAVN).

This sequence belongs to the SF-assemblin family. Post-translationally, consists of at least four isoforms including two phosphorylated.

It localises to the cytoplasm. The protein localises to the cytoskeleton. Functionally, major component of the striated microtubule-associated fibers (SMAFs; system-I-fibers). The sequence is that of SF-assemblin from Spermatozopsis similis (Green alga).